The following is a 453-amino-acid chain: Probable glycine dehydrogenase (decarboxylating) subunit 1 (453 aa).

The protein belongs to the GcvP family. N-terminal subunit subfamily. The glycine cleavage system is composed of four proteins: P, T, L and H. In this organism, the P 'protein' is a heterodimer of two subunits.

The enzyme catalyses N(6)-[(R)-lipoyl]-L-lysyl-[glycine-cleavage complex H protein] + glycine + H(+) = N(6)-[(R)-S(8)-aminomethyldihydrolipoyl]-L-lysyl-[glycine-cleavage complex H protein] + CO2. Functionally, the glycine cleavage system catalyzes the degradation of glycine. The P protein binds the alpha-amino group of glycine through its pyridoxal phosphate cofactor; CO(2) is released and the remaining methylamine moiety is then transferred to the lipoamide cofactor of the H protein. This is Probable glycine dehydrogenase (decarboxylating) subunit 1 from Dictyoglomus thermophilum (strain ATCC 35947 / DSM 3960 / H-6-12).